An 81-amino-acid polypeptide reads, in one-letter code: Putative defensin-like protein 188 (81 aa).

An N-terminal signal peptide occupies residues 1 to 19 (MKNSSLLFILIVVFVISSS). Intrachain disulfides connect Cys-31-Cys-81, Cys-37-Cys-57, Cys-43-Cys-75, and Cys-47-Cys-77.

This sequence belongs to the DEFL family.

The protein localises to the secreted. The polypeptide is Putative defensin-like protein 188 (LCR41) (Arabidopsis thaliana (Mouse-ear cress)).